Reading from the N-terminus, the 1084-residue chain is Autophagy-related protein 11 (1084 aa).

2 coiled-coil regions span residues 585–739 (VQNL…LTES) and 847–879 (VIRRFNDIESLAKKLRKENKNKKILLQKYTNDK). 2 disordered regions span residues 925–961 (SMIPPRVIPNRVEPASNTNNSNPSSVPEDMGSPNMNR) and 973–1007 (NIGSNNSNNNYVNTGNANGNNKPETNIDTTSSTNA). Low complexity-rich tracts occupy residues 940–949 (SNTNNSNPSS) and 973–993 (NIGSNNSNNNYVNTGNANGNN). Positions 994–1007 (KPETNIDTTSSTNA) are enriched in polar residues.

Belongs to the ATG11 family. Homodimer and potential homooligomers. Interacts with ATG1 kinase and the ATG19 and ATG34 cargo protein transporters. Interacts with ATG9, ATG17 and ATG20.

The protein localises to the preautophagosomal structure membrane. Its subcellular location is the vacuole membrane. In terms of biological role, involved in cytoplasm to vacuole transport (Cvt), pexophagy, mitophagy and nucleophagy. Recruits mitochondria for their selective degradation via autophagy (mitophagy) during starvation, through its interaction with ATG32. Works as scaffold proteins that recruit ATG proteins to the pre-autophagosome (PAS), the site of vesicle/autophagosome formation. Required for ATG9 anterograde transport from the mitochondria to the PAS. Also recruits the ATG19-prAPE1 complex to the PAS. Required for the Cvt vesicles completion. The protein is Autophagy-related protein 11 of Kluyveromyces marxianus (strain DMKU3-1042 / BCC 29191 / NBRC 104275) (Yeast).